The following is a 204-amino-acid chain: GTP cyclohydrolase 1 (204 aa).

3 residues coordinate Zn(2+): cysteine 92, histidine 95, and cysteine 165.

This sequence belongs to the GTP cyclohydrolase I family. Homomer.

The catalysed reaction is GTP + H2O = 7,8-dihydroneopterin 3'-triphosphate + formate + H(+). It functions in the pathway cofactor biosynthesis; 7,8-dihydroneopterin triphosphate biosynthesis; 7,8-dihydroneopterin triphosphate from GTP: step 1/1. This Mycolicibacterium paratuberculosis (strain ATCC BAA-968 / K-10) (Mycobacterium paratuberculosis) protein is GTP cyclohydrolase 1.